Reading from the N-terminus, the 253-residue chain is MHYLKKVTIYISLLILVSGCGDSKETEIKQNFNKMLNVYPTKNLEDFYDKEGYRDEEFDKDDKGTWIIRSEMTKQPKGKIMTSKGMVLHMNRNTRSTTGYYVIRKISEDNKSEIDDEEKKYPIKMVNNKIIPTQKINDNKLKNEIENFKFFVQYGSFKNSDDYKEGDIEYNPNAPNYSAQYHLSNDDYNIKQLRKRYDIKTKKTPRLLMRGAGDPKGSSVGYKNLEFTFVKNNEENIYFTDSINFNPSKGKSL.

The N-terminal stretch at 1–19 (MHYLKKVTIYISLLILVSG) is a signal peptide. C20 carries the N-palmitoyl cysteine lipid modification. The S-diacylglycerol cysteine moiety is linked to residue C20.

It belongs to the staphylococcal tandem lipoprotein family.

It is found in the cell membrane. This is an uncharacterized protein from Staphylococcus epidermidis (strain ATCC 35984 / DSM 28319 / BCRC 17069 / CCUG 31568 / BM 3577 / RP62A).